Consider the following 304-residue polypeptide: Type II methyltransferase M.ScaI (304 aa).

This sequence belongs to the N(4)/N(6)-methyltransferase family. N(4) subfamily.

The catalysed reaction is a 2'-deoxycytidine in DNA + S-adenosyl-L-methionine = an N(4)-methyl-2'-deoxycytidine in DNA + S-adenosyl-L-homocysteine + H(+). In terms of biological role, a methylase that recognizes the double-stranded sequence 5'-AGTACT-3', methylates C-5 on both strands, and protects the DNA from cleavage by the ScaI endonuclease. This chain is Type II methyltransferase M.ScaI, found in Streptomyces caespitosus.